Consider the following 511-residue polypeptide: Fas-activated serine/threonine kinase (511 aa).

The 59-residue stretch at 439–497 folds into the RAP domain; it reads VVLMLRERWHFCRDGRVLLGSRALRERHLGLMGYQLLPLPFEELESQRGLPQLKSYLRQ.

It belongs to the FAST protein kinase family. As to quaternary structure, interacts with TIA1; the interactions leads to TIA1 phosphorylation. Interacts with TIAR. In terms of processing, autophosphorylated on serine/threonine residues. Activated by dephosphorylation.

Its subcellular location is the mitochondrion matrix. The catalysed reaction is L-seryl-[Fas-activated protein] + ATP = O-phospho-L-seryl-[Fas-activated protein] + ADP + H(+). It carries out the reaction L-threonyl-[Fas-activated protein] + ATP = O-phospho-L-threonyl-[Fas-activated protein] + ADP + H(+). It catalyses the reaction L-seryl-[protein] + ATP = O-phospho-L-seryl-[protein] + ADP + H(+). The enzyme catalyses L-threonyl-[protein] + ATP = O-phospho-L-threonyl-[protein] + ADP + H(+). Phosphorylates the splicing regulator TIA1, thereby promoting the inclusion of FAS exon 6, which leads to an mRNA encoding a pro-apoptotic form of the receptor. Required for the biogenesis of some mitochondrial-encoded mRNAs, specifically stabilizes ND6 (NADH dehydrogenase complex subunit 6) mRNA, and regulates its levels. The protein is Fas-activated serine/threonine kinase (Fastk) of Mus musculus (Mouse).